A 380-amino-acid chain; its full sequence is Endopolygalacturonase AN8327 (380 aa).

The first 19 residues, 1–19 (MFYALGPLALFAFATEVMA), serve as a signal peptide directing secretion. Residues 20–35 (TPVAYPMTTASPTLAK) constitute a propeptide that is removed on maturation. Residues Cys39 and Cys57 are joined by a disulfide bond. PbH1 repeat units follow at residues 147–169 (LTDS…SING), 170–200 (CDGL…DIGE), 201–222 (SSNV…AVNS), 223–243 (GTSI…SIGS), 252–273 (VDTV…RIKA), 281–303 (IKGV…LIEQ), and 315–338 (TSGI…DSDG). Residue Asp215 is the Proton donor of the active site. Residues Cys217 and Cys233 are joined by a disulfide bond. Residue His237 is part of the active site. The N-linked (GlcNAc...) asparagine glycan is linked to Asn327. A disulfide bridge links Cys345 with Cys350. A glycan (N-linked (GlcNAc...) asparagine) is linked at Asn352. A disulfide bridge connects residues Cys369 and Cys378.

Belongs to the glycosyl hydrolase 28 family.

The protein resides in the secreted. The enzyme catalyses (1,4-alpha-D-galacturonosyl)n+m + H2O = (1,4-alpha-D-galacturonosyl)n + (1,4-alpha-D-galacturonosyl)m.. Functionally, involved in maceration and soft-rotting of plant tissue. Hydrolyzes the 1,4-alpha glycosidic bonds of de-esterified pectate in the smooth region of the plant cell wall. This Emericella nidulans (strain FGSC A4 / ATCC 38163 / CBS 112.46 / NRRL 194 / M139) (Aspergillus nidulans) protein is Endopolygalacturonase AN8327.